A 336-amino-acid chain; its full sequence is Ketol-acid reductoisomerase (NADP(+)) (336 aa).

Residues 5–185 enclose the KARI N-terminal Rossmann domain; that stretch reads SKIYTDKDSN…GATRAGVIPT (181 aa). NADP(+) is bound by residues 28–31, S56, and 86–89; these read YGSQ and DMVQ. Residue H111 is part of the active site. G137 contacts NADP(+). One can recognise a KARI C-terminal knotted domain in the interval 186-331; the sequence is TFKEETETDL…NQLKDLIQKG (146 aa). Mg(2+) is bound by residues D194, E198, E230, and E234. S255 provides a ligand contact to substrate.

It belongs to the ketol-acid reductoisomerase family. Requires Mg(2+) as cofactor.

The enzyme catalyses (2R)-2,3-dihydroxy-3-methylbutanoate + NADP(+) = (2S)-2-acetolactate + NADPH + H(+). The catalysed reaction is (2R,3R)-2,3-dihydroxy-3-methylpentanoate + NADP(+) = (S)-2-ethyl-2-hydroxy-3-oxobutanoate + NADPH + H(+). It participates in amino-acid biosynthesis; L-isoleucine biosynthesis; L-isoleucine from 2-oxobutanoate: step 2/4. The protein operates within amino-acid biosynthesis; L-valine biosynthesis; L-valine from pyruvate: step 2/4. Functionally, involved in the biosynthesis of branched-chain amino acids (BCAA). Catalyzes an alkyl-migration followed by a ketol-acid reduction of (S)-2-acetolactate (S2AL) to yield (R)-2,3-dihydroxy-isovalerate. In the isomerase reaction, S2AL is rearranged via a Mg-dependent methyl migration to produce 3-hydroxy-3-methyl-2-ketobutyrate (HMKB). In the reductase reaction, this 2-ketoacid undergoes a metal-dependent reduction by NADPH to yield (R)-2,3-dihydroxy-isovalerate. This chain is Ketol-acid reductoisomerase (NADP(+)), found in Saccharolobus islandicus (strain Y.N.15.51 / Yellowstone #2) (Sulfolobus islandicus).